The following is a 221-amino-acid chain: Endo-1,4-beta-xylanase A (221 aa).

Residues 1–16 (MKFFATIAALVVGAVA) form the signal peptide. Residues 29–221 (PMLIERAGPG…GTGSASVTVS (193 aa)) form the GH11 domain. The Nucleophile role is filled by glutamate 114. Catalysis depends on glutamate 208, which acts as the Proton donor.

Belongs to the glycosyl hydrolase 11 (cellulase G) family.

Its subcellular location is the secreted. It catalyses the reaction Endohydrolysis of (1-&gt;4)-beta-D-xylosidic linkages in xylans.. Its pathway is glycan degradation; xylan degradation. In terms of biological role, endo-1,4-beta-xylanase involved in the hydrolysis of xylan, a major structural heterogeneous polysaccharide found in plant biomass representing the second most abundant polysaccharide in the biosphere, after cellulose. The chain is Endo-1,4-beta-xylanase A (xynA) from Aureobasidium pullulans (Black yeast).